The primary structure comprises 159 residues: ATP synthase subunit b 2 (159 aa).

A helical membrane pass occupies residues 1-21 (MDATFWAFIALVIFVVIVVYM).

This sequence belongs to the ATPase B chain family. F-type ATPases have 2 components, F(1) - the catalytic core - and F(0) - the membrane proton channel. F(1) has five subunits: alpha(3), beta(3), gamma(1), delta(1), epsilon(1). F(0) has three main subunits: a(1), b(2) and c(10-14). The alpha and beta chains form an alternating ring which encloses part of the gamma chain. F(1) is attached to F(0) by a central stalk formed by the gamma and epsilon chains, while a peripheral stalk is formed by the delta and b chains.

The protein localises to the cell inner membrane. Functionally, f(1)F(0) ATP synthase produces ATP from ADP in the presence of a proton or sodium gradient. F-type ATPases consist of two structural domains, F(1) containing the extramembraneous catalytic core and F(0) containing the membrane proton channel, linked together by a central stalk and a peripheral stalk. During catalysis, ATP synthesis in the catalytic domain of F(1) is coupled via a rotary mechanism of the central stalk subunits to proton translocation. In terms of biological role, component of the F(0) channel, it forms part of the peripheral stalk, linking F(1) to F(0). The polypeptide is ATP synthase subunit b 2 (Brucella canis (strain ATCC 23365 / NCTC 10854 / RM-666)).